We begin with the raw amino-acid sequence, 183 residues long: MSRFKISLPALATRVAVLGFLTLMASVLGGCGAGQISQTATQEPAVNGNRVTLNNLALRDIRIQAAQTGDFLQSGRTVDLMLVAINNSPYVTDRLVSITSDIGTVALNGYTQLPTNGMLFIGTSEGQRIKPPPLQSNNIAKAIVTLAKPITNGLTYNFTFNFEKAGQANVAVPVSAGLAPRQT.

The first 30 residues, 1–30, serve as a signal peptide directing secretion; sequence MSRFKISLPALATRVAVLGFLTLMASVLGG. Cys31 is lipidated: N-palmitoyl cysteine. Cys31 is lipidated: S-diacylglycerol cysteine.

The protein localises to the cell membrane. This is Putative lipoprotein LpqE (lpqE) from Mycobacterium leprae (strain TN).